A 131-amino-acid chain; its full sequence is Translation initiation factor 5A (131 aa).

At K37 the chain carries Hypusine.

This sequence belongs to the eIF-5A family.

It localises to the cytoplasm. In terms of biological role, functions by promoting the formation of the first peptide bond. The sequence is that of Translation initiation factor 5A (eIF5A) from Methanococcus maripaludis (strain C6 / ATCC BAA-1332).